Reading from the N-terminus, the 356-residue chain is Trans-enoyl reductase pgmF (356 aa).

Residues 57-60 (VDFK), 175-178 (SGGC), 198-201 (STPN), Tyr216, 261-262 (VG), and 342-343 (AK) each bind NADP(+).

Belongs to the zinc-containing alcohol dehydrogenase family.

Its function is as follows. FAD-linked oxidoreductase; part of the gene cluster that mediates the biosynthesis of pleosporalin A, ascomycone A, as well as a third cryptic naphthoquinone derived pigment, all responsible for the coloration of conidia. The pathway begins with the biosynthesis of the cyclized heptaketide 3-acetonyl-1,6,8-trihydroxy-2-naphthaldehyde by the NR-PKS pgmA. The C-6 hydroxyl group is further methylated by the O-methyltransferase pgmB to yield fusarubinaldehyde which is in turn oxidized by the cytochrome P450 monooxygenase pgmC at C-9. The C-1 hydroxyl group is then methylated spontaneously. Although pgmE, pgmD and pgmH are essential for the production of pleosporalin A, it is not the case for the 2 other final products and it remains difficult to assign a specific function to each enzyme. PgmF and pgmG seem not to be involved in pigment biosynthesis although they were regulated by the cluster-specific transcription factor pgmR. In Aspergillus terreus (strain NIH 2624 / FGSC A1156), this protein is Trans-enoyl reductase pgmF.